The sequence spans 341 residues: Elongation factor Ts (341 aa).

The involved in Mg(2+) ion dislocation from EF-Tu stretch occupies residues 80-83 (TDFV).

Belongs to the EF-Ts family.

It localises to the cytoplasm. Functionally, associates with the EF-Tu.GDP complex and induces the exchange of GDP to GTP. It remains bound to the aminoacyl-tRNA.EF-Tu.GTP complex up to the GTP hydrolysis stage on the ribosome. The chain is Elongation factor Ts from Lactobacillus johnsonii (strain CNCM I-12250 / La1 / NCC 533).